A 276-amino-acid chain; its full sequence is MKGQILREMHVLKAIEPEFEIQRRIAFIKATLSEAHSKTLVLGISGGVDSSLAGRLCQLAVNSLNQEKASDEYQFIAVRLPYHVQQDEAEAQLACQFIQPSKQVTVNVHDGVVGIHNATLKGLTAAGLSSTDAGKTDFLKGNVKARMRMIVQYDIAGAMGGLVVGTDHSAENITGFYTKWGDGACDLAPLFGLNKRQVRLLAAHLGAPEILVKKAPTADLEDNKPQLEDEVALGLTYDQIDDFLEGKDVAKSVEDKLVSIYKRTQHKRKPIPTIYD.

43 to 50 (GISGGVDS) is an ATP binding site. Asp-49 contributes to the Mg(2+) binding site. Arg-146 contacts deamido-NAD(+). Residue Thr-166 coordinates ATP. Glu-171 is a Mg(2+) binding site. Deamido-NAD(+) is bound by residues Lys-179 and Asp-186. The ATP site is built by Lys-195 and Thr-217. 266–267 (HK) lines the deamido-NAD(+) pocket.

The protein belongs to the NAD synthetase family. In terms of assembly, homodimer.

It carries out the reaction deamido-NAD(+) + NH4(+) + ATP = AMP + diphosphate + NAD(+) + H(+). Its pathway is cofactor biosynthesis; NAD(+) biosynthesis; NAD(+) from deamido-NAD(+) (ammonia route): step 1/1. Catalyzes the ATP-dependent amidation of deamido-NAD to form NAD. Uses ammonia as a nitrogen source. This is NH(3)-dependent NAD(+) synthetase from Shewanella frigidimarina (strain NCIMB 400).